We begin with the raw amino-acid sequence, 229 residues long: Potassium/proton antiporter CemA (229 aa).

Helical transmembrane passes span Phe-7–Phe-27, Ile-107–Gly-127, Ile-154–Ile-174, and Ile-189–Ile-209.

The protein belongs to the CemA family.

Its subcellular location is the plastid. It is found in the chloroplast inner membrane. The enzyme catalyses K(+)(in) + H(+)(out) = K(+)(out) + H(+)(in). Functionally, contributes to K(+)/H(+) antiport activity by supporting proton efflux to control proton extrusion and homeostasis in chloroplasts in a light-dependent manner to modulate photosynthesis. Prevents excessive induction of non-photochemical quenching (NPQ) under continuous-light conditions. Indirectly promotes efficient inorganic carbon uptake into chloroplasts. The polypeptide is Potassium/proton antiporter CemA (Glycine max (Soybean)).